Reading from the N-terminus, the 766-residue chain is Coenzyme PQQ synthesis protein F (766 aa).

His-49 contributes to the Zn(2+) binding site. Glu-52 acts as the Proton acceptor in catalysis. Zn(2+)-binding residues include His-53 and Glu-130.

The protein belongs to the peptidase M16 family. It depends on Zn(2+) as a cofactor.

Its pathway is cofactor biosynthesis; pyrroloquinoline quinone biosynthesis. Its function is as follows. Required for coenzyme pyrroloquinoline quinone (PQQ) biosynthesis. It is thought that this protein is a protease that cleaves peptides bond in a small peptide (gene pqqA), providing the glutamate and tyrosine residues which are necessary for the synthesis of PQQ. The protein is Coenzyme PQQ synthesis protein F (pqqF) of Pseudomonas putida (strain ATCC 47054 / DSM 6125 / CFBP 8728 / NCIMB 11950 / KT2440).